The chain runs to 260 residues: NAD-dependent protein deacetylase (260 aa).

Positions 9–260 constitute a Deacetylase sirtuin-type domain; sequence DDIDGETLDA…QVLPAIVERL (252 aa). Positions 35, 39, 46, 47, 114, 116, 117, and 132 each coordinate NAD(+). Residue Phe-46 coordinates nicotinamide. Positions 116 and 117 each coordinate nicotinamide. The active-site Proton acceptor is His-132. 4 residues coordinate Zn(2+): Cys-140, Cys-143, Cys-166, and Cys-168. NAD(+) is bound by residues Ser-206, Ser-207, Asn-231, Asp-248, and Val-249.

Belongs to the sirtuin family. Class U subfamily. The cofactor is Zn(2+).

It localises to the cytoplasm. It catalyses the reaction N(6)-acetyl-L-lysyl-[protein] + NAD(+) + H2O = 2''-O-acetyl-ADP-D-ribose + nicotinamide + L-lysyl-[protein]. Functionally, NAD-dependent protein deacetylase which modulates the activities of several enzymes which are inactive in their acetylated form. Deacetylates the N-terminal lysine residue of Alba, the major archaeal chromatin protein and that, in turn, increases Alba's DNA binding affinity, thereby repressing transcription. In Haloarcula marismortui (strain ATCC 43049 / DSM 3752 / JCM 8966 / VKM B-1809) (Halobacterium marismortui), this protein is NAD-dependent protein deacetylase.